Reading from the N-terminus, the 611-residue chain is Broad-specificity linear acyl-CoA dehydrogenase FadE5 (611 aa).

FAD-binding positions include 162–165 (MVLT), serine 171, and threonine 198. Serine 171 is an a 2,3-saturated acyl-CoA binding site. Residues 224 to 225 (TK) and arginine 301 contribute to the a 2,3-saturated acyl-CoA site. Arginine 326 lines the FAD pocket. Lysine 338 contributes to the a 2,3-saturated acyl-CoA binding site. 420 to 424 (QTLGG) serves as a coordination point for FAD. A 2,3-saturated acyl-CoA is bound at residue glutamate 447. The Proton acceptor role is filled by glutamate 447. Residue threonine 449 participates in FAD binding. A 2,3-saturated acyl-CoA-binding positions include aspartate 456 and 460–461 (RK).

Belongs to the acyl-CoA dehydrogenase family. As to quaternary structure, homodimer. The cofactor is FAD.

It carries out the reaction a long-chain 2,3-saturated fatty acyl-CoA + oxidized [electron-transfer flavoprotein] + H(+) = a long-chain (2E)-enoyl-CoA + reduced [electron-transfer flavoprotein]. The catalysed reaction is a medium-chain 2,3-saturated fatty acyl-CoA + oxidized [electron-transfer flavoprotein] + H(+) = a medium-chain (2E)-enoyl-CoA + reduced [electron-transfer flavoprotein]. The enzyme catalyses a short-chain 2,3-saturated fatty acyl-CoA + oxidized [electron-transfer flavoprotein] + H(+) = a short-chain (2E)-enoyl-CoA + reduced [electron-transfer flavoprotein]. It catalyses the reaction octadecanoyl-CoA + oxidized [electron-transfer flavoprotein] + H(+) = (2E)-octadecenoyl-CoA + reduced [electron-transfer flavoprotein]. It carries out the reaction oxidized [electron-transfer flavoprotein] + hexadecanoyl-CoA + H(+) = (2E)-hexadecenoyl-CoA + reduced [electron-transfer flavoprotein]. The catalysed reaction is dodecanoyl-CoA + oxidized [electron-transfer flavoprotein] + H(+) = (2E)-dodecenoyl-CoA + reduced [electron-transfer flavoprotein]. The enzyme catalyses decanoyl-CoA + oxidized [electron-transfer flavoprotein] + H(+) = (2E)-decenoyl-CoA + reduced [electron-transfer flavoprotein]. It catalyses the reaction hexanoyl-CoA + oxidized [electron-transfer flavoprotein] + H(+) = (2E)-hexenoyl-CoA + reduced [electron-transfer flavoprotein]. It carries out the reaction butanoyl-CoA + oxidized [electron-transfer flavoprotein] + H(+) = (2E)-butenoyl-CoA + reduced [electron-transfer flavoprotein]. It functions in the pathway lipid metabolism; fatty acid metabolism. Functionally, acyl-CoA dehydrogenase that exhibits broad specificity for linear acyl-CoA substrates, with a preference for long-chain substrates. This chain is Broad-specificity linear acyl-CoA dehydrogenase FadE5, found in Mycobacterium tuberculosis (strain ATCC 25618 / H37Rv).